A 275-amino-acid chain; its full sequence is Large ribosomal subunit protein uL2 (275 aa).

Residues 223-275 (VAMNPVDHPHGGGEGRTSGGRHPVSPWGQPTKGYKTRSNKRTDKYIVRRRNKK) are disordered.

This sequence belongs to the universal ribosomal protein uL2 family. In terms of assembly, part of the 50S ribosomal subunit. Forms a bridge to the 30S subunit in the 70S ribosome.

In terms of biological role, one of the primary rRNA binding proteins. Required for association of the 30S and 50S subunits to form the 70S ribosome, for tRNA binding and peptide bond formation. It has been suggested to have peptidyltransferase activity; this is somewhat controversial. Makes several contacts with the 16S rRNA in the 70S ribosome. The chain is Large ribosomal subunit protein uL2 from Shewanella piezotolerans (strain WP3 / JCM 13877).